Here is a 331-residue protein sequence, read N- to C-terminus: Holliday junction branch migration complex subunit RuvB (331 aa).

Positions Met-1–Tyr-182 are large ATPase domain (RuvB-L). ATP-binding positions include Leu-21, Arg-22, Gly-63, Lys-66, Thr-67, Thr-68, Glu-129–Tyr-131, Arg-172, Tyr-182, and Arg-219. Thr-67 is a binding site for Mg(2+). The tract at residues Ser-183–Gly-254 is small ATPAse domain (RuvB-S). The segment at Gly-257–Ile-331 is head domain (RuvB-H). Arg-310 and Arg-315 together coordinate DNA.

It belongs to the RuvB family. In terms of assembly, homohexamer. Forms an RuvA(8)-RuvB(12)-Holliday junction (HJ) complex. HJ DNA is sandwiched between 2 RuvA tetramers; dsDNA enters through RuvA and exits via RuvB. An RuvB hexamer assembles on each DNA strand where it exits the tetramer. Each RuvB hexamer is contacted by two RuvA subunits (via domain III) on 2 adjacent RuvB subunits; this complex drives branch migration. In the full resolvosome a probable DNA-RuvA(4)-RuvB(12)-RuvC(2) complex forms which resolves the HJ.

The protein localises to the cytoplasm. The catalysed reaction is ATP + H2O = ADP + phosphate + H(+). Its function is as follows. The RuvA-RuvB-RuvC complex processes Holliday junction (HJ) DNA during genetic recombination and DNA repair, while the RuvA-RuvB complex plays an important role in the rescue of blocked DNA replication forks via replication fork reversal (RFR). RuvA specifically binds to HJ cruciform DNA, conferring on it an open structure. The RuvB hexamer acts as an ATP-dependent pump, pulling dsDNA into and through the RuvAB complex. RuvB forms 2 homohexamers on either side of HJ DNA bound by 1 or 2 RuvA tetramers; 4 subunits per hexamer contact DNA at a time. Coordinated motions by a converter formed by DNA-disengaged RuvB subunits stimulates ATP hydrolysis and nucleotide exchange. Immobilization of the converter enables RuvB to convert the ATP-contained energy into a lever motion, pulling 2 nucleotides of DNA out of the RuvA tetramer per ATP hydrolyzed, thus driving DNA branch migration. The RuvB motors rotate together with the DNA substrate, which together with the progressing nucleotide cycle form the mechanistic basis for DNA recombination by continuous HJ branch migration. Branch migration allows RuvC to scan DNA until it finds its consensus sequence, where it cleaves and resolves cruciform DNA. The polypeptide is Holliday junction branch migration complex subunit RuvB (Anaplasma marginale (strain Florida)).